The following is a 165-amino-acid chain: 6,7-dimethyl-8-ribityllumazine synthase (165 aa).

Residues F24, 62–64 (AFE), and 86–88 (AVI) each bind 5-amino-6-(D-ribitylamino)uracil. 91 to 92 (DT) contacts (2S)-2-hydroxy-3-oxobutyl phosphate. The active-site Proton donor is the H94. Position 119 (F119) interacts with 5-amino-6-(D-ribitylamino)uracil. R133 contacts (2S)-2-hydroxy-3-oxobutyl phosphate.

It belongs to the DMRL synthase family.

It catalyses the reaction (2S)-2-hydroxy-3-oxobutyl phosphate + 5-amino-6-(D-ribitylamino)uracil = 6,7-dimethyl-8-(1-D-ribityl)lumazine + phosphate + 2 H2O + H(+). Its pathway is cofactor biosynthesis; riboflavin biosynthesis; riboflavin from 2-hydroxy-3-oxobutyl phosphate and 5-amino-6-(D-ribitylamino)uracil: step 1/2. In terms of biological role, catalyzes the formation of 6,7-dimethyl-8-ribityllumazine by condensation of 5-amino-6-(D-ribitylamino)uracil with 3,4-dihydroxy-2-butanone 4-phosphate. This is the penultimate step in the biosynthesis of riboflavin. The protein is 6,7-dimethyl-8-ribityllumazine synthase of Prochlorococcus marinus (strain MIT 9313).